The primary structure comprises 400 residues: S-adenosylmethionine synthase (400 aa).

Gly-136–Asp-141 is an ATP binding site.

The protein belongs to the AdoMet synthase 2 family. The cofactor is Mg(2+).

The enzyme catalyses L-methionine + ATP + H2O = S-adenosyl-L-methionine + phosphate + diphosphate. It functions in the pathway amino-acid biosynthesis; S-adenosyl-L-methionine biosynthesis; S-adenosyl-L-methionine from L-methionine: step 1/1. Its function is as follows. Catalyzes the formation of S-adenosylmethionine from methionine and ATP. The protein is S-adenosylmethionine synthase of Thermoplasma volcanium (strain ATCC 51530 / DSM 4299 / JCM 9571 / NBRC 15438 / GSS1).